A 201-amino-acid polypeptide reads, in one-letter code: MGKVRAFFSRKGRGNSSGRSRSMREAAMNVDWSPRPSDLAAAAAAKPRPPAAEDETERVFRKFDANGDGRISRAELAALFRSVGHAVTDDEVARMMQEADSDGDGYISLGEFAAISAPPPGDAAAAEEDLRHAFGVFDADGNGVITPAELARVLRGIGEAATVAQCRRMIDGVDRNGDGLINFEEFKLMMAAGAGFGRIAS.

Positions 1 to 55 are disordered; it reads MGKVRAFFSRKGRGNSSGRSRSMREAAMNVDWSPRPSDLAAAAAAKPRPPAAEDE. EF-hand domains are found at residues 51-86, 87-122, 125-160, and 161-196; these read AAED…VGHA, VTDD…PPGD, AAEE…IGEA, and ATVA…GAGF. Positions 64, 66, 68, 70, 75, 100, 102, 104, 106, 111, 138, 140, 142, 149, 174, 176, 178, and 185 each coordinate Ca(2+).

Potential calcium sensor. The sequence is that of Probable calcium-binding protein CML15 (CML15) from Oryza sativa subsp. japonica (Rice).